We begin with the raw amino-acid sequence, 107 residues long: Nucleoid-associated protein RT0857 (107 aa).

This sequence belongs to the YbaB/EbfC family. Homodimer.

It localises to the cytoplasm. It is found in the nucleoid. In terms of biological role, binds to DNA and alters its conformation. May be involved in regulation of gene expression, nucleoid organization and DNA protection. The chain is Nucleoid-associated protein RT0857 from Rickettsia typhi (strain ATCC VR-144 / Wilmington).